Reading from the N-terminus, the 300-residue chain is Zinc finger protein RME1 (300 aa).

A compositionally biased stretch (polar residues) spans 80–90 (QAYDSTSSTEE). A disordered region spans residues 80-100 (QAYDSTSSTEEGTAPQLRPDE). 3 consecutive C2H2-type zinc fingers follow at residues 178–199 (YHCS…HLDE), 206–234 (CKCP…ASQH), and 256–281 (LNCP…AMVH).

Its subcellular location is the nucleus. In terms of biological role, involved in the control of meiosis. Represses the transcription of the IME1 gene thereby inhibiting cells from entering meiosis. But also activates the CLN2 gene thus promoting mitosis. The sequence is that of Zinc finger protein RME1 (RME1) from Saccharomyces cerevisiae (strain ATCC 204508 / S288c) (Baker's yeast).